We begin with the raw amino-acid sequence, 798 residues long: Serine/threonine-protein kinase haspin (798 aa).

The segment at 1–110 (MAASLPGPGS…WKLRARPSLT (110 aa)) is disordered. At Ser-58 the chain carries Phosphoserine. Positions 59–70 (QSDDPDDPDDPD) are enriched in acidic residues. A Phosphoserine; by AURKB modification is found at Ser-93. At Thr-97 the chain carries Phosphothreonine. Ser-143 is modified (phosphoserine; by AURKB). At Ser-147 the chain carries Phosphoserine. The segment at 275-350 (LVVGNGPEGP…KHQEATETSL (76 aa)) is disordered. Over residues 300–315 (CQERGLQEAVRREHQE) the composition is skewed to basic and acidic residues. One can recognise a Protein kinase domain in the interval 484–798 (LQRCEKIGEG…DLLCQHSLFK (315 aa)). Residues 490-498 (IGEGVFGEV), Lys-511, 606-611 (EFGGID), 649-654 (DLHWGN), and 687-689 (DYT) each bind ATP. Asp-649 serves as the catalytic Proton acceptor.

This sequence belongs to the protein kinase superfamily. Ser/Thr protein kinase family. Haspin subfamily. Mg(2+) serves as cofactor. Autophosphorylated on both serine and threonine residues. Strongly phosphorylated during mitosis but this does not appear to significantly affect its intrinsic kinase activity. Phosphorylation by AURKB is required for full activity toward histone H3 at 'Ser-3' in mitosis. As to expression, strongly expressed in testis. Also present in thymus and bone marrow and low levels observed in prostate, intestine, lung, spleen and lymph node. Expressed in fetal skin, liver, kidney and small intestine and also in proliferating but not non-proliferating cell lines.

The protein localises to the nucleus. Its subcellular location is the chromosome. It is found in the cytoplasm. It localises to the cytoskeleton. The protein resides in the spindle. It carries out the reaction L-seryl-[protein] + ATP = O-phospho-L-seryl-[protein] + ADP + H(+). The catalysed reaction is L-threonyl-[protein] + ATP = O-phospho-L-threonyl-[protein] + ADP + H(+). Constitutive activity that does not require phosphorylation. Specifically inhibited by 3-(1H-indazol-5-yl)-N-propylimidazo[1,2-b]pyridazin-6-amine (CHR-6494). Functionally, serine/threonine-protein kinase that phosphorylates histone H3 at 'Thr-3' (H3T3ph) during mitosis. May act through H3T3ph to both position and modulate activation of AURKB and other components of the chromosomal passenger complex (CPC) at centromeres to ensure proper chromatid cohesion, metaphase alignment and normal progression through the cell cycle. In Homo sapiens (Human), this protein is Serine/threonine-protein kinase haspin.